We begin with the raw amino-acid sequence, 309 residues long: Beta-lactamase (309 aa).

Residues Met-1 to Ala-28 form the signal peptide. Catalysis depends on Ser-92, which acts as the Acyl-ester intermediate. Catalysis depends on Glu-188, which acts as the Proton acceptor. Lys-254 to Gly-256 provides a ligand contact to substrate.

It belongs to the class-A beta-lactamase family.

It catalyses the reaction a beta-lactam + H2O = a substituted beta-amino acid. Its function is as follows. This protein is a beta-lactamase with a substrate specificity for penicillins. The polypeptide is Beta-lactamase (bla) (Bacillus thuringiensis).